Reading from the N-terminus, the 426-residue chain is UPF0597 protein CLI_1810 (426 aa).

Belongs to the UPF0597 family.

This chain is UPF0597 protein CLI_1810, found in Clostridium botulinum (strain Langeland / NCTC 10281 / Type F).